A 121-amino-acid chain; its full sequence is MTMIMRSIIDSLEALFSSFFSSIAPNLYEVLNFHCKKHTGMNFAEATLKNPKLTYEFLVKFFDSEMAVDVLDYLLSNFLKKYSIRAYGILKSFKSGDNKKLIEVAKLYSKVMQNGGGKDRD.

This is an uncharacterized protein from Archaeoglobus fulgidus (strain ATCC 49558 / DSM 4304 / JCM 9628 / NBRC 100126 / VC-16).